The following is a 690-amino-acid chain: Highly divergent homeobox (690 aa).

Residues 3–63 constitute a DNA-binding region (homeobox 1); that stretch reads LRSVFTVEQQ…NKRRKMSSKN (61 aa). Disordered stretches follow at residues 55 to 76 and 112 to 132; these read KRRK…TSLS and SPAS…QITE. Low complexity predominate over residues 64–76; the sequence is SESGTATTGTSLS. The segment covering 113–123 has biased composition (polar residues); it reads PASSSSRQGTN. Residues Lys135, Lys140, Lys144, Lys163, Lys172, Lys194, Lys212, Lys221, and Lys232 each participate in a glycyl lysine isopeptide (Lys-Gly) (interchain with G-Cter in SUMO2) cross-link. Positions 435–498 form a DNA-binding region, homeobox 2; sequence ALQDRTQFSD…NRRRKYRLMG (64 aa). Residues 501–539 are disordered; the sequence is VPPPRGGPADFSEQPESGSLSALTPGEEAGPEVGEDNDR. Residue Lys613 forms a Glycyl lysine isopeptide (Lys-Gly) (interchain with G-Cter in SUMO2) linkage. The interval 664–690 is disordered; the sequence is FNHASLEPDDTSFSVSSLSEKNVSESL. The span at 674–690 shows a compositional bias: polar residues; it reads TSFSVSSLSEKNVSESL.

The protein resides in the nucleus. The chain is Highly divergent homeobox (HDX) from Homo sapiens (Human).